Reading from the N-terminus, the 165-residue chain is Dihydrofolate reductase (165 aa).

Positions 3–165 constitute a DHFR domain; the sequence is VVGLIWAQST…RYRLHSYHRS (163 aa). 7 to 9 provides a ligand contact to substrate; the sequence is IWA. NADP(+)-binding positions include 8-9 and 16-21; these read WA and IGRDGG. Aspartate 29 provides a ligand contact to substrate. Residue 45–48 participates in NADP(+) binding; sequence GRRT. Position 62 (arginine 62) interacts with substrate. NADP(+) contacts are provided by residues 67–70 and 100–105; these read LSRQ and IGGEQI. Threonine 119 is a binding site for substrate.

It belongs to the dihydrofolate reductase family.

The catalysed reaction is (6S)-5,6,7,8-tetrahydrofolate + NADP(+) = 7,8-dihydrofolate + NADPH + H(+). It functions in the pathway cofactor biosynthesis; tetrahydrofolate biosynthesis; 5,6,7,8-tetrahydrofolate from 7,8-dihydrofolate: step 1/1. Functionally, key enzyme in folate metabolism. Catalyzes an essential reaction for de novo glycine and purine synthesis, and for DNA precursor synthesis. The protein is Dihydrofolate reductase (folA) of Mycobacterium leprae (strain TN).